The sequence spans 403 residues: Phosphoglycerate kinase (403 aa).

Substrate is bound by residues 22-24 (DLN), Arg37, 60-63 (HLGR), Arg119, and Arg156. ATP contacts are provided by residues Lys206, Gly302, Glu333, and 359–362 (GGDS).

Belongs to the phosphoglycerate kinase family. Monomer.

Its subcellular location is the cytoplasm. It carries out the reaction (2R)-3-phosphoglycerate + ATP = (2R)-3-phospho-glyceroyl phosphate + ADP. It functions in the pathway carbohydrate degradation; glycolysis; pyruvate from D-glyceraldehyde 3-phosphate: step 2/5. This Leifsonia xyli subsp. xyli (strain CTCB07) protein is Phosphoglycerate kinase.